The chain runs to 134 residues: Small ribosomal subunit protein uS8c (134 aa).

Belongs to the universal ribosomal protein uS8 family. In terms of assembly, part of the 30S ribosomal subunit.

It is found in the plastid. The protein localises to the chloroplast. Its function is as follows. One of the primary rRNA binding proteins, it binds directly to 16S rRNA central domain where it helps coordinate assembly of the platform of the 30S subunit. This is Small ribosomal subunit protein uS8c (rps8) from Aethionema cordifolium (Lebanon stonecress).